The primary structure comprises 475 residues: MALAKTDMLVSPLQISDPFSSFPHSPTMDNYPKLDGAEQFDHHAADAFSEMSLSNEKAVLESSYANHTTRLPSLTYTGRFSLEPAPNSSNTLWPEPLFSLVSGLVGMANVSSSSAPSSSPSSSSSSSSSSSSQSPPLSCSVQSNESSPIYSAAPTFPNSSPEMFPDHSPQPFQNASTASIPYPPPAYPVSKTTFQVPMIPDYLFPQQQGDVSLVSADQKPFQAMENRTQQPSLTPLSTIKAFATQTSQDLKTINSTYQSQIIKPSRMRKYPNRPSKTPPHERPYACPVESCDRRFSRSDELTRHIRIHTGQKPFQCRICMRNFSRSDHLTTHIRTHTGEKPFACDICGRKFARSDERKRHTKIHLRQKDKKADKATPVSIASPVSAYSPSASTSYPSPVPTSYSSPVSSCYPSPVHSSFPSPTTAVTYPSVTSTFQTQCITSFPSSIVTNSYSSPVSSALSDMSVTYSPRTIEIC.

Disordered regions lie at residues 109–180 and 264–285; these read NVSS…TASI and PSRMRKYPNRPSKTPPHERPYA. A compositionally biased stretch (low complexity) spans 111-140; the sequence is SSSSAPSSSPSSSSSSSSSSSSQSPPLSCS. The segment covering 170–179 has biased composition (polar residues); it reads QPFQNASTAS. 3 consecutive C2H2-type zinc fingers follow at residues 284-308, 314-336, and 342-364; these read YACPVESCDRRFSRSDELTRHIRIH, FQCRICMRNFSRSDHLTTHIRTH, and FACDICGRKFARSDERKRHTKIH. A disordered region spans residues 355–379; sequence DERKRHTKIHLRQKDKKADKATPVS. Residues 359–369 show a composition bias toward basic residues; sequence RHTKIHLRQKD.

This sequence belongs to the EGR C2H2-type zinc-finger protein family.

It is found in the nucleus. The protein localises to the cytoplasm. Transcriptional regulator. Recognizes and binds to the DNA sequence 5'-GCG(T/G)GGGCG-3'(EGR-site) in the promoter region of target genes. Binds double-stranded target DNA, irrespective of the cytosine methylation status. Regulates the transcription of numerous target genes, and thereby plays an important role in regulating the response to growth factors, DNA damage, and ischemia. Plays a role in the regulation of cell survival, proliferation and cell death. Mediates responses to ischemia and hypoxia; regulates the expression of proteins that are involved in inflammatory processes. Plays a role in regulating the expression of circadian clock genes. This Xenopus laevis (African clawed frog) protein is Early growth response protein 1-B (egr1-b).